A 711-amino-acid chain; its full sequence is Polyribonucleotide nucleotidyltransferase (711 aa).

Residues aspartate 486 and aspartate 492 each coordinate Mg(2+). The KH domain maps to 553 to 612 (PRIHTIKISTDKIKDVIGKGGSVIRALTEETGTTIEIEDDGTVKIAATDGEKAKYAIRRI). In terms of domain architecture, S1 motif spans 622–690 (GRIYNGKVTR…RQGRVRLSIK (69 aa)). Residues 689-711 (IKEATEQTQPAAAPEAPTSEQGE) are disordered. Over residues 694-711 (EQTQPAAAPEAPTSEQGE) the composition is skewed to low complexity.

Belongs to the polyribonucleotide nucleotidyltransferase family. As to quaternary structure, component of the RNA degradosome, which is a multiprotein complex involved in RNA processing and mRNA degradation. Requires Mg(2+) as cofactor.

The protein resides in the cytoplasm. The enzyme catalyses RNA(n+1) + phosphate = RNA(n) + a ribonucleoside 5'-diphosphate. Its function is as follows. Involved in mRNA degradation. Catalyzes the phosphorolysis of single-stranded polyribonucleotides processively in the 3'- to 5'-direction. This chain is Polyribonucleotide nucleotidyltransferase, found in Salmonella arizonae (strain ATCC BAA-731 / CDC346-86 / RSK2980).